A 247-amino-acid chain; its full sequence is DNA polymerase sliding clamp (247 aa).

This sequence belongs to the PCNA family. In terms of assembly, homotrimer. The subunits circularize to form a toroid; DNA passes through its center. Replication factor C (RFC) is required to load the toroid on the DNA.

Sliding clamp subunit that acts as a moving platform for DNA processing. Responsible for tethering the catalytic subunit of DNA polymerase and other proteins to DNA during high-speed replication. The polypeptide is DNA polymerase sliding clamp (Haloarcula marismortui (strain ATCC 43049 / DSM 3752 / JCM 8966 / VKM B-1809) (Halobacterium marismortui)).